The primary structure comprises 225 residues: Probable septum site-determining protein MinC (225 aa).

The protein belongs to the MinC family. In terms of assembly, interacts with MinD and FtsZ.

Its function is as follows. Cell division inhibitor that blocks the formation of polar Z ring septums. Rapidly oscillates between the poles of the cell to destabilize FtsZ filaments that have formed before they mature into polar Z rings. Prevents FtsZ polymerization. The polypeptide is Probable septum site-determining protein MinC (Listeria monocytogenes serotype 4a (strain HCC23)).